Reading from the N-terminus, the 319-residue chain is Thioredoxin reductase (319 aa).

FAD contacts are provided by residues S11–A14, V40–A41, Q45, N54, V87, C145, D288, and R295–A297. A disulfide bridge links C142 with C145.

The protein belongs to the class-II pyridine nucleotide-disulfide oxidoreductase family. As to quaternary structure, homodimer. FAD is required as a cofactor.

It localises to the cytoplasm. The enzyme catalyses [thioredoxin]-dithiol + NADP(+) = [thioredoxin]-disulfide + NADPH + H(+). The polypeptide is Thioredoxin reductase (TRR1) (Eremothecium gossypii (strain ATCC 10895 / CBS 109.51 / FGSC 9923 / NRRL Y-1056) (Yeast)).